Consider the following 161-residue polypeptide: Ubiquitin-conjugating enzyme E2Q-like protein 1 (161 aa).

One can recognise a UBC core domain in the interval 1 to 154; the sequence is MKELQDIARL…VKTHEKYGWV (154 aa). Cys88 acts as the Glycyl thioester intermediate in catalysis.

The protein belongs to the ubiquitin-conjugating enzyme family. Interacts with FBXW7.

It localises to the nucleus. The catalysed reaction is S-ubiquitinyl-[E1 ubiquitin-activating enzyme]-L-cysteine + [E2 ubiquitin-conjugating enzyme]-L-cysteine = [E1 ubiquitin-activating enzyme]-L-cysteine + S-ubiquitinyl-[E2 ubiquitin-conjugating enzyme]-L-cysteine.. Its pathway is protein modification; protein ubiquitination. Functionally, probable E2 ubiquitin-protein ligase that catalyzes the covalent attachment of ubiquitin to target proteins. May facilitate the monoubiquitination and degradation of MTOR and CCNE1 through interaction with FBXW7. The protein is Ubiquitin-conjugating enzyme E2Q-like protein 1 (Ube2ql1) of Mus musculus (Mouse).